The following is a 197-amino-acid chain: Cyclin-dependent kinase inhibitor 1B (197 aa).

Polar residues predominate over residues 1 to 11; it reads MSNVRVSNGSP. The interval 1–34 is disordered; it reads MSNVRVSNGSPSLERMDARQAEHPKPSACRNLFG. A Phosphoserine; by UHMK1 modification is found at S10. Over residues 14-25 the composition is skewed to basic and acidic residues; it reads ERMDARQAEHPK. Positions 51–91 are interaction with CDK2; that stretch reads DMEEASQRKWNFDFQNHKPLEGRYEWQEVERGSLPEFYYRP. Position 74 is a phosphotyrosine; by SRC (Y74). The segment at 86 to 197 is disordered; it reads EFYYRPPRPP…PKKPGLRRQT (112 aa). A Phosphotyrosine; by ABL, LYN, SRC and JAK2 modification is found at Y88. At Y89 the chain carries Phosphotyrosine. Over residues 104 to 113 the composition is skewed to polar residues; that stretch reads QESQDVSGSR. The Nuclear localization signal motif lies at 153–169; it reads KRPAAEDSSSQNKRANR. T170 carries the post-translational modification Phosphothreonine; by CaMK1. Polar residues predominate over residues 175–186; the sequence is SDGSPNAGTVEQ. A Phosphothreonine; by PKB/AKT1, CDK1 and CDK2 modification is found at T187. Residue T197 is modified to Phosphothreonine; by CaMK1, PKB/AKT1, RPS6KA1, RPS6KA3 and PIM1.

Belongs to the CDI family. In terms of assembly, forms a ternary complex composed of CCNE1, CDK2 and CDKN1B. Interacts directly with CCNE1; the interaction is inhibited by CDK2-dependent phosphorylation on Thr-187. Interacts with COPS5, subunit of the COP9 signalosome complex; the interaction leads to CDKN1B degradation. Interacts with NUP50; the interaction leads to nuclear import and degradation of phosphorylated CDKN1B. Interacts with CCND1 and SNX6. Interacts (Thr-197-phosphorylated form) with 14-3-3 proteins, binds strongly YWHAQ, weakly YWHAE and YWHAH, but not YWHAB nor YWHAZ; the interaction with YWHAQ results in translocation to the cytoplasm. Interacts with AKT1 and LYN; the interactions lead to cytoplasmic mislocation, phosphorylation of CDKN1B and inhibition of cell cycle arrest. Forms a ternary complex with CCNA2 and CDK2; CDKN1B inhibits the kinase activity of CDK2 through conformational rearrangements. Interacts (unphosphorylated form) with CDK2. Forms a complex with CDK2 and SPDYA, but does not directly interact with SPDYA. Forms a ternary complex composed of cyclin D, CDK4 and CDKN1B. Interacts (phosphorylated on Tyr-88 and Tyr-89) with CDK4; the interaction is required for cyclin D and CDK4 complex assembly, induces nuclear translocation and activates the CDK4 kinase activity. Interacts with GRB2. Interacts with PIM1. Identified in a complex with SKP1, SKP2 and CKS1B. Interacts with UHMK1; the interaction leads to cytoplasmic mislocation, phosphorylation of CDKN1B and inhibition of cell cycle arrest. Also interacts with CDK1. Dephosphorylated on Thr-187 by PPM1H, leading to CDKN1B stability. Phosphorylated; phosphorylation occurs on serine, threonine and tyrosine residues. Phosphorylation on Ser-10 is the major site of phosphorylation in resting cells, takes place at the G(0)-G(1) phase and leads to protein stability. Phosphorylation on other sites is greatly enhanced by mitogens, growth factors, MYC and in certain cancer cell lines. The phosphorylated form found in the cytoplasm is inactivate. Phosphorylation on Thr-197 is required for interaction with 14-3-3 proteins. Phosphorylation on Thr-187, by CDK1 and CDK2 leads to protein ubiquitination and proteasomal degradation. Tyrosine phosphorylation promotes this process. Phosphorylation by PKB/AKT1 can be suppressed by LY294002, an inhibitor of the catalytic subunit of PI3K. Phosphorylation on Tyr-88 and Tyr-89 has no effect on binding CDK2, but is required for binding CDK4. Dephosphorylated on tyrosine residues by G-CSF. Dephosphorylated on Thr-187 by PPM1H, leading to CDKN1B stability. Post-translationally, ubiquitinated; in the cytoplasm by the KPC complex (composed of RNF123/KPC1 and UBAC1/KPC2) and, in the nucleus, by SCF(SKP2). The latter requires prior phosphorylation on Thr-187. Ubiquitinated; by a TRIM21-containing SCF(SKP2)-like complex; leads to its degradation. In terms of processing, subject to degradation in the lysosome. Interaction with SNX6 promotes lysosomal degradation.

The protein localises to the nucleus. Its subcellular location is the cytoplasm. It is found in the endosome. Its function is as follows. Important regulator of cell cycle progression. Inhibits the kinase activity of CDK2 bound to cyclin A, but has little inhibitory activity on CDK2 bound to SPDYA. Involved in G1 arrest. Potent inhibitor of cyclin E- and cyclin A-CDK2 complexes. Forms a complex with cyclin type D-CDK4 complexes and is involved in the assembly, stability, and modulation of CCND1-CDK4 complex activation. Acts either as an inhibitor or an activator of cyclin type D-CDK4 complexes depending on its phosphorylation state and/or stoichometry. The polypeptide is Cyclin-dependent kinase inhibitor 1B (Cdkn1b) (Mus musculus (Mouse)).